Consider the following 369-residue polypeptide: Anhydro-N-acetylmuramic acid kinase (369 aa).

12 to 19 (GTSLDGVD) is an ATP binding site.

It belongs to the anhydro-N-acetylmuramic acid kinase family.

It catalyses the reaction 1,6-anhydro-N-acetyl-beta-muramate + ATP + H2O = N-acetyl-D-muramate 6-phosphate + ADP + H(+). It participates in amino-sugar metabolism; 1,6-anhydro-N-acetylmuramate degradation. The protein operates within cell wall biogenesis; peptidoglycan recycling. Its function is as follows. Catalyzes the specific phosphorylation of 1,6-anhydro-N-acetylmuramic acid (anhMurNAc) with the simultaneous cleavage of the 1,6-anhydro ring, generating MurNAc-6-P. Is required for the utilization of anhMurNAc either imported from the medium or derived from its own cell wall murein, and thus plays a role in cell wall recycling. The protein is Anhydro-N-acetylmuramic acid kinase of Shigella boydii serotype 18 (strain CDC 3083-94 / BS512).